Reading from the N-terminus, the 476-residue chain is Glutamate mutase epsilon subunit (476 aa).

Position 62 (Arg-62) interacts with L-glutamate. Position 64 (Gly-64) interacts with adenosylcob(III)alamin. Arg-96 provides a ligand contact to L-glutamate. Asn-119 serves as a coordination point for adenosylcob(III)alamin. L-glutamate-binding positions include 145–146 (RH), Glu-167, and Tyr-173. Adenosylcob(III)alamin is bound at residue Pro-176. Tyr-177 contributes to the L-glutamate binding site. Positions 289, 318, and 322 each coordinate adenosylcob(III)alamin.

The protein belongs to the methylaspartate mutase GlmE subunit family. Heterotetramer composed of 2 epsilon subunits (GlmE) and 2 sigma subunits (GlmS). GlmE exists as a homodimer and GlmS as a monomer. It depends on adenosylcob(III)alamin as a cofactor.

The enzyme catalyses (2S,3S)-3-methyl-L-aspartate = L-glutamate. It functions in the pathway amino-acid degradation; L-glutamate degradation via mesaconate pathway; acetate and pyruvate from L-glutamate: step 1/4. Its function is as follows. Catalyzes the carbon skeleton rearrangement of L-glutamate to L-threo-3-methylaspartate ((2S,3S)-3-methylaspartate). This chain is Glutamate mutase epsilon subunit, found in Halobacterium salinarum (strain ATCC 700922 / JCM 11081 / NRC-1) (Halobacterium halobium).